The primary structure comprises 80 residues: Defensin-like protein 2 (80 aa).

The first 29 residues, 1–29 (MAKFASIIVLLFVALVVFAAFEEPTMVEA), serve as a signal peptide directing secretion. The residue at position 30 (Gln30) is a Pyrrolidone carboxylic acid. Disulfide bonds link Cys33-Cys80, Cys44-Cys65, Cys50-Cys74, and Cys54-Cys76.

It belongs to the DEFL family.

It localises to the secreted. Possesses antifungal activity sensitive to inorganic cations. Induces potential changes in fungal membranes and increased K(+) efflux and Ca(2+) uptake. The protein is Defensin-like protein 2 (AFP2) of Raphanus sativus (Radish).